A 398-amino-acid chain; its full sequence is Elongation factor Tu (398 aa).

The region spanning lysine 10 to glutamate 207 is the tr-type G domain. A G1 region spans residues glycine 19–threonine 26. Glycine 19–threonine 26 provides a ligand contact to GTP. Residue threonine 26 coordinates Mg(2+). Residues glycine 63–asparagine 67 are G2. The segment at aspartate 84–glycine 87 is G3. GTP-binding positions include aspartate 84–histidine 88 and asparagine 139–aspartate 142. A G4 region spans residues asparagine 139 to aspartate 142. The segment at serine 177–leucine 179 is G5.

It belongs to the TRAFAC class translation factor GTPase superfamily. Classic translation factor GTPase family. EF-Tu/EF-1A subfamily. As to quaternary structure, monomer.

Its subcellular location is the cytoplasm. The catalysed reaction is GTP + H2O = GDP + phosphate + H(+). In terms of biological role, GTP hydrolase that promotes the GTP-dependent binding of aminoacyl-tRNA to the A-site of ribosomes during protein biosynthesis. This chain is Elongation factor Tu, found in Streptococcus suis (strain 98HAH33).